Consider the following 692-residue polypeptide: Elongation factor G (692 aa).

The 275-residue stretch at 8-282 (ENTRNIGIMA…AVIDYLPSPL (275 aa)) folds into the tr-type G domain. GTP-binding positions include 17-24 (AHIDAGKT), 81-85 (DTPGH), and 135-138 (NKMD).

It belongs to the TRAFAC class translation factor GTPase superfamily. Classic translation factor GTPase family. EF-G/EF-2 subfamily.

The protein localises to the cytoplasm. Its function is as follows. Catalyzes the GTP-dependent ribosomal translocation step during translation elongation. During this step, the ribosome changes from the pre-translocational (PRE) to the post-translocational (POST) state as the newly formed A-site-bound peptidyl-tRNA and P-site-bound deacylated tRNA move to the P and E sites, respectively. Catalyzes the coordinated movement of the two tRNA molecules, the mRNA and conformational changes in the ribosome. This chain is Elongation factor G, found in Bacillus thuringiensis subsp. konkukian (strain 97-27).